Here is a 328-residue protein sequence, read N- to C-terminus: Malate dehydrogenase (328 aa).

Residue 16 to 22 participates in NAD(+) binding; the sequence is GAAGQIS. Residues Arg-97 and Arg-103 each coordinate substrate. NAD(+) contacts are provided by residues Asn-110, Gln-117, and 134–136; that span reads VGN. 2 residues coordinate substrate: Asn-136 and Arg-167. His-192 acts as the Proton acceptor in catalysis.

It belongs to the LDH/MDH superfamily. MDH type 2 family.

The catalysed reaction is (S)-malate + NAD(+) = oxaloacetate + NADH + H(+). Functionally, catalyzes the reversible oxidation of malate to oxaloacetate. The sequence is that of Malate dehydrogenase from Corynebacterium glutamicum (strain R).